The sequence spans 434 residues: Hydrogenobyrinate a,c-diamide synthase (434 aa).

Positions 243-434 constitute a GATase cobBQ-type domain; the sequence is RIAVARDIAF…MHLIDVAGAA (192 aa). C326 (nucleophile) is an active-site residue.

Belongs to the CobB/CbiA family. As to quaternary structure, homodimer. It depends on Mg(2+) as a cofactor.

It carries out the reaction hydrogenobyrinate + 2 L-glutamine + 2 ATP + 2 H2O = hydrogenobyrinate a,c-diamide + 2 L-glutamate + 2 ADP + 2 phosphate + 2 H(+). The protein operates within cofactor biosynthesis; adenosylcobalamin biosynthesis; cob(II)yrinate a,c-diamide from precorrin-2 (aerobic route): step 9/10. Catalyzes the ATP-dependent amidation of the two carboxylate groups at positions a and c of hydrogenobyrinate, using either L-glutamine or ammonia as the nitrogen source. To a much lesser extent, can also use cobyrinate as substrate in vitro, but the physiological substrate is indeed hydrogenobyrinate, as part of the aerobic pathway for cobalamin biosynthesis. The chain is Hydrogenobyrinate a,c-diamide synthase from Sinorhizobium sp.